A 525-amino-acid polypeptide reads, in one-letter code: MELTLWTYEGPPHVGAMRVASSMKDIHYVLHAPQGDTYADLLFTMIERRGQRPPVTYTTFQARDLGGDTAELVKRNITEAVERFKPKTLLVGESCTAELIQDQPGALAKGMGFDIPIVNLELPAYSKKENWGASETFYQIIRTLLKDKVNEIDKINPQRWKSLGRRPKVNILGPTLLGFRCRDDVIEIQRILSEQGIDTNVVAPLGSSPEDIERLIDADINVCLYHEIAEISCEWLKRNCGMEYTTTIPIGIKNTINFIHEVHEKLDLPLTNKGELENKSKLPWYSKSVDSNYLTGKRVFIFGDGTHAIAAAKIAKDELGFEVVGLGTYSREMARQVRAAAKDLNIEALITNSYLEVEDAMKKASPELVLGTQMERHSAKRLGIPCSVISTPMHVQDVPARYSPQMGWEGANVIFDDWVHPLMMGLEEHLIDMFKHDFEFVDGHQSHLGHTATNAPDNKETKQAQSNMNIQEKSILWTESGKAELTKVPFFVRGKVKSNTEKYALSKGLPEINDETLYDAKAFFG.

D36 lines the [4Fe-4S] cluster pocket. D290 functions as the Proton donor in the catalytic mechanism. 425–426 (GL) contacts substrate.

This sequence belongs to the ChlB/BchB/BchZ family. As to quaternary structure, protochlorophyllide reductase is composed of three subunits; ChlL, ChlN and ChlB. Forms a heterotetramer of two ChlB and two ChlN subunits. It depends on [4Fe-4S] cluster as a cofactor.

The catalysed reaction is chlorophyllide a + oxidized 2[4Fe-4S]-[ferredoxin] + 2 ADP + 2 phosphate = protochlorophyllide a + reduced 2[4Fe-4S]-[ferredoxin] + 2 ATP + 2 H2O. Its pathway is porphyrin-containing compound metabolism; chlorophyll biosynthesis (light-independent). Component of the dark-operative protochlorophyllide reductase (DPOR) that uses Mg-ATP and reduced ferredoxin to reduce ring D of protochlorophyllide (Pchlide) to form chlorophyllide a (Chlide). This reaction is light-independent. The NB-protein (ChlN-ChlB) is the catalytic component of the complex. The sequence is that of Light-independent protochlorophyllide reductase subunit B from Prochlorococcus marinus (strain MIT 9312).